The chain runs to 1448 residues: Gag-Pol polyprotein (1448 aa).

The N-myristoyl glycine; by host moiety is linked to residue Gly2. The short motif at 16 to 22 (LEKIRLR) is the Nuclear export signal element. The short motif at 26-32 (KKKYMLK) is the Nuclear localization signal element. Residues 218–227 (HPQQAPQQGQ) show a composition bias toward low complexity. Residues 218–237 (HPQQAPQQGQLREPSGSDIA) form a disordered region. 2 consecutive CCHC-type zinc fingers follow at residues 391–408 (IKCWNCGKEGHSARQCRA) and 412–429 (QGCWKCGKMDHVMAKCPN). A disordered region spans residues 440 to 461 (LGKEAPQFPHGSSASGADANCS). Residues 517 to 586 (VEVLLDTGAD…TPINIFGRNL (70 aa)) enclose the Peptidase A2 domain. Residue Asp522 is the For protease activity; shared with dimeric partner of the active site. A Reverse transcriptase domain is found at 640-830 (DGQLEEAPPT…PPFQWMGYEL (191 aa)). The Mg(2+) site is built by Asp706, Asp781, and Asp782. Positions 823-831 (FQWMGYELW) are RT 'primer grip'. The short motif at 993–1009 (WEQWWTDYWQVTWIPEW) is the Tryptophan repeat motif element. Positions 1029–1152 (IEGEETYYVD…IDHLVSQGIR (124 aa)) constitute an RNase H type-1 domain. The Mg(2+) site is built by Asp1038, Glu1073, Asp1093, and Asp1144. The segment at 1158-1199 (EKIEPAQEEHSKYHSNIKELVFKFGLPRLVAKQIVDTCDKCH) adopts an Integrase-type zinc-finger fold. His1167, His1171, Cys1195, and Cys1198 together coordinate Zn(2+). Residues 1209–1359 (VNSDLGTWQM…TPAERLINMI (151 aa)) form the Integrase catalytic domain. Mg(2+) contacts are provided by Asp1219 and Asp1271. The segment at residues 1378–1425 (FRVYYREGRDQLWKGPGELLWKGEGAVILKVGTDIKVVPRRKAKIIKD) is a DNA-binding region (integrase-type). The tract at residues 1426–1448 (YGGGKEMDSSSHMEDTGEAREVA) is disordered.

Homotrimer. Interacts with gp41 (via C-terminus). As to quaternary structure, homodimer. The active site consists of two apposed aspartic acid residues. In terms of assembly, heterodimer of p66 RT and p51 RT (RT p66/p51). Heterodimerization of RT is essential for DNA polymerase activity. Despite the sequence identities, p66 RT and p51 RT have distinct folding. Homotetramer; may further associate as a homohexadecamer. Mg(2+) is required as a cofactor. Specific enzymatic cleavages by the viral protease yield mature proteins. The protease is released by autocatalytic cleavage. The polyprotein is cleaved during and after budding, this process is termed maturation. Proteolytic cleavage of p66 RT removes the RNase H domain to yield the p51 RT subunit. Post-translationally, capsid protein p24 is phosphorylated.

It is found in the virion. Its subcellular location is the host nucleus. The protein localises to the host cytoplasm. It localises to the host cell membrane. The catalysed reaction is Specific for a P1 residue that is hydrophobic, and P1' variable, but often Pro.. It catalyses the reaction Endohydrolysis of RNA in RNA/DNA hybrids. Three different cleavage modes: 1. sequence-specific internal cleavage of RNA. Human immunodeficiency virus type 1 and Moloney murine leukemia virus enzymes prefer to cleave the RNA strand one nucleotide away from the RNA-DNA junction. 2. RNA 5'-end directed cleavage 13-19 nucleotides from the RNA end. 3. DNA 3'-end directed cleavage 15-20 nucleotides away from the primer terminus.. The enzyme catalyses 3'-end directed exonucleolytic cleavage of viral RNA-DNA hybrid.. It carries out the reaction DNA(n) + a 2'-deoxyribonucleoside 5'-triphosphate = DNA(n+1) + diphosphate. Its activity is regulated as follows. The viral protease is inhibited by many synthetic protease inhibitors (PIs), such as amprenavir, atazanavir, indinavir, loprinavir, nelfinavir, ritonavir and saquinavir. RT can be inhibited either by nucleoside RT inhibitors (NRTIs) or by non nucleoside RT inhibitors (NNRTIs). NRTIs act as chain terminators, whereas NNRTIs inhibit DNA polymerization by binding a small hydrophobic pocket near the RT active site and inducing an allosteric change in this region. Classical NRTIs are abacavir, adefovir (PMEA), didanosine (ddI), lamivudine (3TC), stavudine (d4T), tenofovir (PMPA), zalcitabine (ddC), and zidovudine (AZT). Classical NNRTIs are atevirdine (BHAP U-87201E), delavirdine, efavirenz (DMP-266), emivirine (I-EBU), and nevirapine (BI-RG-587). The tritherapies used as a basic effective treatment of AIDS associate two NRTIs and one NNRTI. Use of protease inhibitors in tritherapy regimens permit more ambitious therapeutic strategies. Its function is as follows. Gag-Pol polyprotein and Gag polyprotein may regulate their own translation, by the binding genomic RNA in the 5'-UTR. At low concentration, Gag-Pol and Gag would promote translation, whereas at high concentration, the polyproteins encapsidate genomic RNA and then shut off translation. Matrix protein p17 has two main functions: in infected cell, it targets Gag and Gag-pol polyproteins to the plasma membrane via a multipartite membrane-binding signal, that includes its myristointegration complex. The myristoylation signal and the NLS exert conflicting influences its subcellular localization. The key regulation of these motifs might be phosphorylation of a portion of MA molecules on the C-terminal tyrosine at the time of virus maturation, by virion-associated cellular tyrosine kinase. Implicated in the release from host cell mediated by Vpu. In terms of biological role, capsid protein p24 forms the conical core that encapsulates the genomic RNA-nucleocapsid complex in the virion. The core is constituted by capsid protein hexamer subunits. The core is disassembled soon after virion entry. Interaction with host PPIA/CYPA protects the virus from restriction by host TRIM5-alpha and from an unknown antiviral activity in host cells. This capsid restriction by TRIM5 is one of the factors which restricts SIV to the simian species. Functionally, nucleocapsid protein p7 encapsulates and protects viral dimeric unspliced (genomic) RNA. Binds these RNAs through its zinc fingers. Facilitates rearangement of nucleic acid secondary structure during retrotranscription of genomic RNA. This capability is referred to as nucleic acid chaperone activity. Its function is as follows. The aspartyl protease mediates proteolytic cleavages of Gag and Gag-Pol polyproteins during or shortly after the release of the virion from the plasma membrane. Cleavages take place as an ordered, step-wise cascade to yield mature proteins. This process is called maturation. Displays maximal activity during the budding process just prior to particle release from the cell. Also cleaves Nef and Vif, probably concomitantly with viral structural proteins on maturation of virus particles. Hydrolyzes host EIF4GI and PABP1 in order to shut off the capped cellular mRNA translation. The resulting inhibition of cellular protein synthesis serves to ensure maximal viral gene expression and to evade host immune response. Reverse transcriptase/ribonuclease H (RT) is a multifunctional enzyme that converts the viral dimeric RNA genome into dsDNA in the cytoplasm, shortly after virus entry into the cell. This enzyme displays a DNA polymerase activity that can copy either DNA or RNA templates, and a ribonuclease H (RNase H) activity that cleaves the RNA strand of RNA-DNA heteroduplexes in a partially processive 3' to 5' endonucleasic mode. Conversion of viral genomic RNA into dsDNA requires many steps. A tRNA binds to the primer-binding site (PBS) situated at the 5'-end of the viral RNA. RT uses the 3' end of the tRNA primer to perform a short round of RNA-dependent minus-strand DNA synthesis. The reading proceeds through the U5 region and ends after the repeated (R) region which is present at both ends of viral RNA. The portion of the RNA-DNA heteroduplex is digested by the RNase H, resulting in a ssDNA product attached to the tRNA primer. This ssDNA/tRNA hybridizes with the identical R region situated at the 3' end of viral RNA. This template exchange, known as minus-strand DNA strong stop transfer, can be either intra- or intermolecular. RT uses the 3' end of this newly synthesized short ssDNA to perform the RNA-dependent minus-strand DNA synthesis of the whole template. RNase H digests the RNA template except for two polypurine tracts (PPTs) situated at the 5'-end and near the center of the genome. It is not clear if both polymerase and RNase H activities are simultaneous. RNase H can probably proceed both in a polymerase-dependent (RNA cut into small fragments by the same RT performing DNA synthesis) and a polymerase-independent mode (cleavage of remaining RNA fragments by free RTs). Secondly, RT performs DNA-directed plus-strand DNA synthesis using the PPTs that have not been removed by RNase H as primers. PPTs and tRNA primers are then removed by RNase H. The 3' and 5' ssDNA PBS regions hybridize to form a circular dsDNA intermediate. Strand displacement synthesis by RT to the PBS and PPT ends produces a blunt ended, linear dsDNA copy of the viral genome that includes long terminal repeats (LTRs) at both ends. In terms of biological role, integrase catalyzes viral DNA integration into the host chromosome, by performing a series of DNA cutting and joining reactions. This enzyme activity takes place after virion entry into a cell and reverse transcription of the RNA genome in dsDNA. The first step in the integration process is 3' processing. This step requires a complex comprising the viral genome, matrix protein, Vpr and integrase. This complex is called the pre-integration complex (PIC). The integrase protein removes 2 nucleotides from each 3' end of the viral DNA, leaving recessed CA OH's at the 3' ends. In the second step, the PIC enters cell nucleus. This process is mediated through integrase and Vpr proteins, and allows the virus to infect a non dividing cell. This ability to enter the nucleus is specific of lentiviruses, other retroviruses cannot and rely on cell division to access cell chromosomes. In the third step, termed strand transfer, the integrase protein joins the previously processed 3' ends to the 5' ends of strands of target cellular DNA at the site of integration. The 5'-ends are produced by integrase-catalyzed staggered cuts, 5 bp apart. A Y-shaped, gapped, recombination intermediate results, with the 5'-ends of the viral DNA strands and the 3' ends of target DNA strands remaining unjoined, flanking a gap of 5 bp. The last step is viral DNA integration into host chromosome. This involves host DNA repair synthesis in which the 5 bp gaps between the unjoined strands are filled in and then ligated. Since this process occurs at both cuts flanking the SIV genome, a 5 bp duplication of host DNA is produced at the ends of SIV integration. Alternatively, Integrase may catalyze the excision of viral DNA just after strand transfer, this is termed disintegration. This Cercopithecidae (Old World monkeys) protein is Gag-Pol polyprotein (gag-pol).